Consider the following 262-residue polypeptide: NAD-dependent protein deacylase (262 aa).

Residues methionine 1–threonine 262 enclose the Deacetylase sirtuin-type domain. NAD(+) is bound at residue glycine 22 to tryptophan 42. Substrate is bound by residues tyrosine 67 and arginine 70. Glutamine 101–aspartate 104 is a binding site for NAD(+). Histidine 119 serves as the catalytic Proton acceptor. Positions 127, 130, 155, and 158 each coordinate Zn(2+). Residues glycine 195–serine 197, asparagine 221–glutamate 223, and alanine 239 each bind NAD(+).

This sequence belongs to the sirtuin family. Class III subfamily. It depends on Zn(2+) as a cofactor.

It is found in the cytoplasm. It catalyses the reaction N(6)-acetyl-L-lysyl-[protein] + NAD(+) + H2O = 2''-O-acetyl-ADP-D-ribose + nicotinamide + L-lysyl-[protein]. It carries out the reaction N(6)-succinyl-L-lysyl-[protein] + NAD(+) + H2O = 2''-O-succinyl-ADP-D-ribose + nicotinamide + L-lysyl-[protein]. Its function is as follows. NAD-dependent lysine deacetylase and desuccinylase that specifically removes acetyl and succinyl groups on target proteins. Modulates the activities of several proteins which are inactive in their acylated form. The protein is NAD-dependent protein deacylase of Pseudomonas putida (strain ATCC 47054 / DSM 6125 / CFBP 8728 / NCIMB 11950 / KT2440).